A 181-amino-acid polypeptide reads, in one-letter code: Protein CENTRORADIALIS (181 aa).

This sequence belongs to the phosphatidylethanolamine-binding protein family. May form homodimers in solution.

The protein localises to the cytoplasm. Expression of CEN leads to a morphological switch between shoot growth and the development of flower structures (inflorescence). May form complexes with phosphorylated ligands by interfering with kinases and their effectors. The polypeptide is Protein CENTRORADIALIS (CEN) (Antirrhinum majus (Garden snapdragon)).